The chain runs to 317 residues: ADP-L-glycero-D-manno-heptose-6-epimerase (317 aa).

NADP(+)-binding positions include 10 to 11 (FI), 31 to 32 (DD), Gln-38, Lys-53, 75 to 79 (QGACS), and Asn-92. Catalysis depends on Tyr-139, which acts as the Proton acceptor. Lys-143 lines the NADP(+) pocket. Asn-166 lines the substrate pocket. NADP(+) contacts are provided by Val-167 and Lys-175. The active-site Proton acceptor is Lys-175. Substrate contacts are provided by residues Gly-177, His-184, 198 to 201 (FEGV), Arg-211, and Tyr-275.

This sequence belongs to the NAD(P)-dependent epimerase/dehydratase family. HldD subfamily. In terms of assembly, homopentamer. Requires NADP(+) as cofactor.

It carries out the reaction ADP-D-glycero-beta-D-manno-heptose = ADP-L-glycero-beta-D-manno-heptose. It functions in the pathway nucleotide-sugar biosynthesis; ADP-L-glycero-beta-D-manno-heptose biosynthesis; ADP-L-glycero-beta-D-manno-heptose from D-glycero-beta-D-manno-heptose 7-phosphate: step 4/4. Its function is as follows. Catalyzes the interconversion between ADP-D-glycero-beta-D-manno-heptose and ADP-L-glycero-beta-D-manno-heptose via an epimerization at carbon 6 of the heptose. This Shewanella frigidimarina (strain NCIMB 400) protein is ADP-L-glycero-D-manno-heptose-6-epimerase.